Reading from the N-terminus, the 101-residue chain is uncharacterized protein (101 aa).

This is an uncharacterized protein from Escherichia coli (strain K12).